The following is a 137-amino-acid chain: Large ribosomal subunit protein uL16 (137 aa).

Positions methionine 1–glutamine 13 are enriched in basic residues. The interval methionine 1–threonine 22 is disordered.

Belongs to the universal ribosomal protein uL16 family. In terms of assembly, part of the 50S ribosomal subunit.

In terms of biological role, binds 23S rRNA and is also seen to make contacts with the A and possibly P site tRNAs. This chain is Large ribosomal subunit protein uL16, found in Azoarcus sp. (strain BH72).